The primary structure comprises 767 residues: 5-methyltetrahydropteroyltriglutamate--homocysteine methyltransferase (767 aa).

5-methyltetrahydropteroyltri-L-glutamate contacts are provided by residues 17-20 and Lys117; that span reads RELK. Residues 442–444 and Glu495 contribute to the L-homocysteine site; that span reads IGS. L-methionine is bound by residues 442–444 and Glu495; that span reads IGS. 5-methyltetrahydropteroyltri-L-glutamate-binding positions include 526-527 and Trp572; that span reads RC. Asp610 contacts L-homocysteine. Residue Asp610 coordinates L-methionine. Glu616 is a 5-methyltetrahydropteroyltri-L-glutamate binding site. Zn(2+) contacts are provided by His653, Cys655, and Glu677. The Proton donor role is filled by His706. Cys738 lines the Zn(2+) pocket.

This sequence belongs to the vitamin-B12 independent methionine synthase family. It depends on Zn(2+) as a cofactor.

The catalysed reaction is 5-methyltetrahydropteroyltri-L-glutamate + L-homocysteine = tetrahydropteroyltri-L-glutamate + L-methionine. It functions in the pathway amino-acid biosynthesis; L-methionine biosynthesis via de novo pathway; L-methionine from L-homocysteine (MetE route): step 1/1. Functionally, catalyzes the transfer of a methyl group from 5-methyltetrahydrofolate to homocysteine resulting in methionine formation. The protein is 5-methyltetrahydropteroyltriglutamate--homocysteine methyltransferase of Bifidobacterium animalis subsp. lactis (strain AD011).